Reading from the N-terminus, the 141-residue chain is MVISSVFSAFADIPSVYLISVNCGARELWLTITSIHFVSLREQRYEFLANSLGERTSSLKSQEEMVSVSRNGKQLLSEASFFRLGKHVHLNFLPFENTFEMALRNDFQIFCTSILFTCYIQSFSLLISNFFIAIEVSRSFF.

The helical transmembrane segment at 114-134 (ILFTCYIQSFSLLISNFFIAI) threads the bilayer.

The protein resides in the membrane. This is an uncharacterized protein from Schizosaccharomyces pombe (strain 972 / ATCC 24843) (Fission yeast).